Reading from the N-terminus, the 289-residue chain is Stress response regulator protein 1 (289 aa).

Residues 77-136 (LDCTNSEMDEEDDFEDDEDDENLGLINPLHHKSSHGQISDYSPLTPFTEPPSASLSKPSF) are disordered. The segment covering 83–98 (EMDEEDDFEDDEDDEN) has biased composition (acidic residues). The span at 127 to 136 (PSASLSKPSF) shows a compositional bias: polar residues. The 119-residue stretch at 163–281 (NFLIVDDNII…YDFVMDRIDE (119 aa)) folds into the Response regulatory domain. Asp214 carries the post-translational modification 4-aspartylphosphate.

Functionally, required for stress adaptation, morphogenesis and virulence. The protein is Stress response regulator protein 1 (SRR1) of Scheffersomyces stipitis (strain ATCC 58785 / CBS 6054 / NBRC 10063 / NRRL Y-11545) (Yeast).